A 255-amino-acid polypeptide reads, in one-letter code: Hydroxyacylglutathione hydrolase (255 aa).

Zn(2+) is bound by residues His-56, His-58, Asp-60, His-61, His-114, Asp-133, and His-171.

Belongs to the metallo-beta-lactamase superfamily. Glyoxalase II family. As to quaternary structure, monomer. Requires Zn(2+) as cofactor.

The enzyme catalyses an S-(2-hydroxyacyl)glutathione + H2O = a 2-hydroxy carboxylate + glutathione + H(+). It functions in the pathway secondary metabolite metabolism; methylglyoxal degradation; (R)-lactate from methylglyoxal: step 2/2. Its function is as follows. Thiolesterase that catalyzes the hydrolysis of S-D-lactoyl-glutathione to form glutathione and D-lactic acid. The polypeptide is Hydroxyacylglutathione hydrolase (Cereibacter sphaeroides (strain ATCC 17025 / ATH 2.4.3) (Rhodobacter sphaeroides)).